The sequence spans 361 residues: Queuine tRNA-ribosyltransferase (361 aa).

Asp92 acts as the Proton acceptor in catalysis. Residues 92–96 (DSGGF), Asp146, Gln189, and Gly216 each bind substrate. An RNA binding region spans residues 247–253 (GVGKPAD). Asp266 (nucleophile) is an active-site residue. Residues 271–275 (TRSGR) form an RNA binding; important for wobble base 34 recognition region. Zn(2+)-binding residues include Cys304, Cys306, Cys309, and His335.

Belongs to the queuine tRNA-ribosyltransferase family. As to quaternary structure, homodimer. Within each dimer, one monomer is responsible for RNA recognition and catalysis, while the other monomer binds to the replacement base PreQ1. The cofactor is Zn(2+).

It catalyses the reaction 7-aminomethyl-7-carbaguanine + guanosine(34) in tRNA = 7-aminomethyl-7-carbaguanosine(34) in tRNA + guanine. It participates in tRNA modification; tRNA-queuosine biosynthesis. Its function is as follows. Catalyzes the base-exchange of a guanine (G) residue with the queuine precursor 7-aminomethyl-7-deazaguanine (PreQ1) at position 34 (anticodon wobble position) in tRNAs with GU(N) anticodons (tRNA-Asp, -Asn, -His and -Tyr). Catalysis occurs through a double-displacement mechanism. The nucleophile active site attacks the C1' of nucleotide 34 to detach the guanine base from the RNA, forming a covalent enzyme-RNA intermediate. The proton acceptor active site deprotonates the incoming PreQ1, allowing a nucleophilic attack on the C1' of the ribose to form the product. After dissociation, two additional enzymatic reactions on the tRNA convert PreQ1 to queuine (Q), resulting in the hypermodified nucleoside queuosine (7-(((4,5-cis-dihydroxy-2-cyclopenten-1-yl)amino)methyl)-7-deazaguanosine). This Rickettsia felis (strain ATCC VR-1525 / URRWXCal2) (Rickettsia azadi) protein is Queuine tRNA-ribosyltransferase.